A 553-amino-acid chain; its full sequence is Phosphoglucomutase (553 aa).

The segment at 1–25 (MQATIKRYPTSPISGQTLGTSGLRK) is disordered. A compositionally biased stretch (polar residues) spans 11-20 (SPISGQTLGT). Substrate is bound by residues T20, R24, 117 to 118 (SH), and K131. Residue S117 is the Phosphoserine intermediate of the active site. A Mg(2+)-binding site is contributed by S117. D289, D291, and D293 together coordinate Mg(2+). Substrate is bound by residues 293–294 (DR), T352, 371–373 (EES), K384, and R509.

It belongs to the phosphohexose mutase family. The cofactor is Mg(2+).

Its subcellular location is the cytoplasm. It carries out the reaction alpha-D-glucose 1-phosphate = alpha-D-glucose 6-phosphate. Catalyzes the reversible conversion of glucose 1-phosphate into glucose 6-phosphate. This enzyme participates in both the breakdown and synthesis of glucose. This Entamoeba histolytica (strain ATCC 30459 / HM-1:IMSS / ABRM) protein is Phosphoglucomutase.